An 823-amino-acid polypeptide reads, in one-letter code: Polyadenylation and cleavage factor homolog 11 (823 aa).

A CID domain is found at 3–135 (SVESAARDYR…ELDMKINKLD (133 aa)). 5 disordered regions span residues 142-176 (NPQT…STST), 188-301 (SSTP…KTLK), 340-395 (SSAP…LPAP), 570-643 (LPAP…EKRS), and 728-755 (WLTP…VASS). 2 stretches are compositionally biased toward polar residues: residues 157–176 (APSQ…STST) and 188–198 (SSTPGAASASK). Over residues 200 to 226 (VVEKTKSPGTVNKEKQVKKEPKQDPLD) the composition is skewed to basic and acidic residues. 2 stretches are compositionally biased toward low complexity: residues 227 to 242 (KLLP…SSPA) and 342 to 353 (APPFQHPQQHHP). Residues 374 to 390 (PQDPAPIVPVQAPPPQQ) show a composition bias toward pro residues. Low complexity predominate over residues 571–581 (PAPARSPSSPR). Polar residues predominate over residues 609-624 (QPQQNARWGGANKQQN).

The sequence is that of Polyadenylation and cleavage factor homolog 11 (pcf-11) from Caenorhabditis elegans.